The following is a 938-amino-acid chain: AP-2 complex subunit alpha-2 (938 aa).

Residues 11 to 12, K43, Y53, and 57 to 61 each bind a 1,2-diacyl-sn-glycero-3-phospho-(1D-myo-inositol-3,4,5-trisphosphate); these read RG and KYVCK. The segment at 616-677 is disordered; the sequence is LKKKKGPSTV…APPVPAGPPP (62 aa). The segment covering 645–668 has biased composition (low complexity); that stretch reads PALASTSAVSTPSPSADLLGLGAA.

This sequence belongs to the adaptor complexes large subunit family. As to quaternary structure, adaptor protein complex 2 (AP-2) is a heterotetramer composed of two large adaptins (alpha-type subunit AP2A1 or AP2A2 and beta-type subunit AP2B1), a medium adaptin (mu-type subunit AP2M1) and a small adaptin (sigma-type subunit AP2S1). Binds clathrin. Binds EPN1, EPS15, AMPH, SNAP91 and BIN1. Interacts with HIP1. Interacts with DGKD. Interacts with DENND1A, DENND1B and DENND1C. Interacts with FCHO1. Interacts with ATAT1; this interaction is required for efficient alpha-tubulin acetylation by ATAT1. Interacts with KIAA1107. Together with AP2B1 and AP2M1, it interacts with ADAM10; this interaction facilitates ADAM10 endocytosis from the plasma membrane during long-term potentiation in hippocampal neurons. Interacts with CLN3 (via dileucine motif). Interacts with ABCB11; this interaction regulates cell membrane expression of ABCB11 through its internalization in a clathrin-dependent manner and its subsequent degradation. Interacts with DNAJC6.

It is found in the cell membrane. The protein localises to the membrane. The protein resides in the coated pit. Component of the adaptor protein complex 2 (AP-2). Adaptor protein complexes function in protein transport via transport vesicles in different membrane traffic pathways. Adaptor protein complexes are vesicle coat components and appear to be involved in cargo selection and vesicle formation. AP-2 is involved in clathrin-dependent endocytosis in which cargo proteins are incorporated into vesicles surrounded by clathrin (clathrin-coated vesicles, CCVs) which are destined for fusion with the early endosome. The clathrin lattice serves as a mechanical scaffold but is itself unable to bind directly to membrane components. Clathrin-associated adaptor protein (AP) complexes which can bind directly to both the clathrin lattice and to the lipid and protein components of membranes are considered to be the major clathrin adaptors contributing the CCV formation. AP-2 also serves as a cargo receptor to selectively sort the membrane proteins involved in receptor-mediated endocytosis. AP-2 seems to play a role in the recycling of synaptic vesicle membranes from the presynaptic surface. AP-2 recognizes Y-X-X-[FILMV] (Y-X-X-Phi) and [ED]-X-X-X-L-[LI] endocytosis signal motifs within the cytosolic tails of transmembrane cargo molecules. AP-2 may also play a role in maintaining normal post-endocytic trafficking through the ARF6-regulated, non-clathrin pathway. During long-term potentiation in hippocampal neurons, AP-2 is responsible for the endocytosis of ADAM10. The AP-2 alpha subunit binds polyphosphoinositide-containing lipids, positioning AP-2 on the membrane. The AP-2 alpha subunit acts via its C-terminal appendage domain as a scaffolding platform for endocytic accessory proteins. The AP-2 alpha and AP-2 sigma subunits are thought to contribute to the recognition of the [ED]-X-X-X-L-[LI] motif. The chain is AP-2 complex subunit alpha-2 from Bos taurus (Bovine).